The chain runs to 570 residues: Set1/Ash2 histone methyltransferase complex subunit ash-2 (570 aa).

The PHD-type zinc finger occupies 19-76 (TTVCYCDGKRELGSVEVVCSTCLKWFHGRCLKEFHELNSNGVPFMICYTFTCKQCRPT). A disordered region spans residues 201-242 (NREPRHIELPPIEGPKTRGASKRRHAEAPVTGKKQKLAADYS). The B30.2/SPRY domain maps to 270–468 (PNVPEDPAWN…TLVEMPGSYI (199 aa)).

In terms of assembly, component of the SET2 complex (also known as the SET1/COMPASS complex), which contains at least set-2, swd-2.1, cfp-1, rbbp-5, wdr-5.1, dpy-30 and ash-2. Within the complex, interacts with cfp-1 and wdr-5.1. Expressed in somatic and germline tissues (at protein level).

Its subcellular location is the nucleus. Component of the set-2/ash-2 histone methyltransferase (HMT) complex. Required for the di- and trimethylation at 'Lys-4' of histone H3, a mark associated with epigenetic transcriptional activation. Implicated in the epigenetic inheritance of lifespan over several generations. Functions as a transcriptional regulator. Acts in the germline to limit the longevity of the soma, probably by regulating a lipid metabolism pathway that signals from the germline to the intestine, thereby preventing accumulation of mono-unsaturated fatty acids. This Caenorhabditis elegans protein is Set1/Ash2 histone methyltransferase complex subunit ash-2.